Reading from the N-terminus, the 343-residue chain is Holliday junction branch migration complex subunit RuvB (343 aa).

A large ATPase domain (RuvB-L) region spans residues S4–Y184. Residues I23, R24, G65, K68, T69, T70, E131–Y133, R174, Y184, and R221 each bind ATP. T69 lines the Mg(2+) pocket. The small ATPAse domain (RuvB-S) stretch occupies residues N185–K255. The segment at S258–E343 is head domain (RuvB-H). DNA is bound by residues R294, R313, and R318.

It belongs to the RuvB family. Homohexamer. Forms an RuvA(8)-RuvB(12)-Holliday junction (HJ) complex. HJ DNA is sandwiched between 2 RuvA tetramers; dsDNA enters through RuvA and exits via RuvB. An RuvB hexamer assembles on each DNA strand where it exits the tetramer. Each RuvB hexamer is contacted by two RuvA subunits (via domain III) on 2 adjacent RuvB subunits; this complex drives branch migration. In the full resolvosome a probable DNA-RuvA(4)-RuvB(12)-RuvC(2) complex forms which resolves the HJ.

It localises to the cytoplasm. The catalysed reaction is ATP + H2O = ADP + phosphate + H(+). In terms of biological role, the RuvA-RuvB-RuvC complex processes Holliday junction (HJ) DNA during genetic recombination and DNA repair, while the RuvA-RuvB complex plays an important role in the rescue of blocked DNA replication forks via replication fork reversal (RFR). RuvA specifically binds to HJ cruciform DNA, conferring on it an open structure. The RuvB hexamer acts as an ATP-dependent pump, pulling dsDNA into and through the RuvAB complex. RuvB forms 2 homohexamers on either side of HJ DNA bound by 1 or 2 RuvA tetramers; 4 subunits per hexamer contact DNA at a time. Coordinated motions by a converter formed by DNA-disengaged RuvB subunits stimulates ATP hydrolysis and nucleotide exchange. Immobilization of the converter enables RuvB to convert the ATP-contained energy into a lever motion, pulling 2 nucleotides of DNA out of the RuvA tetramer per ATP hydrolyzed, thus driving DNA branch migration. The RuvB motors rotate together with the DNA substrate, which together with the progressing nucleotide cycle form the mechanistic basis for DNA recombination by continuous HJ branch migration. Branch migration allows RuvC to scan DNA until it finds its consensus sequence, where it cleaves and resolves cruciform DNA. This Marinobacter nauticus (strain ATCC 700491 / DSM 11845 / VT8) (Marinobacter aquaeolei) protein is Holliday junction branch migration complex subunit RuvB.